The chain runs to 712 residues: Amine oxidase [copper-containing] gamma 1 (712 aa).

Residues 1–24 (MAEPSFARLFLLFFSFLLIFATYS) form the signal peptide. N-linked (GlcNAc...) asparagine glycosylation is found at N146 and N173. C188 and C210 are oxidised to a cystine. 352-363 (YMDAGELGLGPT) provides a ligand contact to substrate. Catalysis depends on D354, which acts as the Proton acceptor. C373 and C399 are disulfide-bonded. 439–444 (VGNYDY) contacts substrate. The active-site Schiff-base intermediate with substrate; via topaquinone is Y442. Y442 bears the 2',4',5'-topaquinone mark. Cu cation is bound by residues H499 and H501. Mn(2+) is bound by residues D508, M509, and D510. Residues N516 and N617 are each glycosylated (N-linked (GlcNAc...) asparagine). The Mn(2+) site is built by D651 and I652. H662 contacts Cu cation.

This sequence belongs to the copper/topaquinone oxidase family. In terms of assembly, homodimer. The cofactor is Cu cation. It depends on Zn(2+) as a cofactor. Requires L-topaquinone as cofactor. Mn(2+) is required as a cofactor. In terms of processing, topaquinone (TPQ) is generated by copper-dependent autoxidation of a specific tyrosyl residue. In terms of tissue distribution, mostly expressed in roots, stems and flowers, and, at lower levels, in leaves and cotyledons.

The protein resides in the secreted. It is found in the extracellular space. The protein localises to the apoplast. It carries out the reaction a primary methyl amine + O2 + H2O = an aldehyde + H2O2 + NH4(+). The protein operates within amine and polyamine degradation; putrescine degradation. Functionally, copper amine oxidase that can use putrescine and spermidine as substrates. Required for abscisic acid- (ABA) and polyamine- (PA) and H(2)O(2)-dependent induced nitric oxide (NO) biosynthesis. Involved in ABA signal transduction and in responses to osmotic stress. This Arabidopsis thaliana (Mouse-ear cress) protein is Amine oxidase [copper-containing] gamma 1.